The sequence spans 272 residues: Phosphonates import ATP-binding protein PhnC (272 aa).

One can recognise an ABC transporter domain in the interval Leu-2–His-244. Gly-35 to Ser-42 contacts ATP.

It belongs to the ABC transporter superfamily. Phosphonates importer (TC 3.A.1.9.1) family. As to quaternary structure, the complex is composed of two ATP-binding proteins (PhnC), two transmembrane proteins (PhnE) and a solute-binding protein (PhnD).

The protein resides in the cell inner membrane. It carries out the reaction phosphonate(out) + ATP + H2O = phosphonate(in) + ADP + phosphate + H(+). Its function is as follows. Part of the ABC transporter complex PhnCDE involved in phosphonates import. Responsible for energy coupling to the transport system. The chain is Phosphonates import ATP-binding protein PhnC from Hydrogenovibrio crunogenus (strain DSM 25203 / XCL-2) (Thiomicrospira crunogena).